The primary structure comprises 24 residues: DCCGVKLEMCHPCLCDNSCKKSGK.

Intrachain disulfides connect Cys2/Cys10, Cys3/Cys15, and Cys13/Cys19. At Lys24 the chain carries Lysine amide.

Belongs to the conotoxin A superfamily. Expressed by the venom duct.

The protein resides in the secreted. Functionally, probable neurotoxin with ion channel inhibitor activity. In vivo, elicits dose-dependently excitatory activity upon injection into fish. Its action is slowly reversible. The polypeptide is Conotoxin PIVF (Conus purpurascens (Purple cone)).